The sequence spans 347 residues: Farnesyl pyrophosphate synthase ERG20 (347 aa).

Isopentenyl diphosphate is bound by residues Lys50, Arg53, and Gln88. Mg(2+) contacts are provided by Asp95 and Asp99. Arg104 contacts dimethylallyl diphosphate. Residue Arg105 coordinates isopentenyl diphosphate. Dimethylallyl diphosphate contacts are provided by Lys192, Thr193, Gln232, Lys249, and Lys258.

Belongs to the FPP/GGPP synthase family. Mg(2+) serves as cofactor.

The catalysed reaction is isopentenyl diphosphate + dimethylallyl diphosphate = (2E)-geranyl diphosphate + diphosphate. It carries out the reaction isopentenyl diphosphate + (2E)-geranyl diphosphate = (2E,6E)-farnesyl diphosphate + diphosphate. It participates in isoprenoid biosynthesis; farnesyl diphosphate biosynthesis; farnesyl diphosphate from geranyl diphosphate and isopentenyl diphosphate: step 1/1. Its pathway is isoprenoid biosynthesis; geranyl diphosphate biosynthesis; geranyl diphosphate from dimethylallyl diphosphate and isopentenyl diphosphate: step 1/1. Functionally, farnesyl pyrophosphate synthase; part of the second module of ergosterol biosynthesis pathway that includes the middle steps of the pathway. ERG20 catalyzes the sequential condensation of isopentenyl pyrophosphate with dimethylallyl pyrophosphate, and then with the resultant geranylpyrophosphate to the ultimate product farnesyl pyrophosphate. The second module is carried out in the vacuole and involves the formation of farnesyl diphosphate, which is also an important intermediate in the biosynthesis of ubiquinone, dolichol, heme and prenylated proteins. Activity by the mevalonate kinase ERG12 (FG05912) first converts mevalonate into 5-phosphomevalonate. 5-phosphomevalonate is then further converted to 5-diphosphomevalonate by the phosphomevalonate kinase ERG8 (FG09764). The diphosphomevalonate decarboxylase ERG19 (FG10424) then produces isopentenyl diphosphate. The isopentenyl-diphosphate delta-isomerase IDI1 (FG09722) then catalyzes the 1,3-allylic rearrangement of the homoallylic substrate isopentenyl (IPP) to its highly electrophilic allylic isomer, dimethylallyl diphosphate (DMAPP). Finally the farnesyl diphosphate synthase ERG20 (FG06784) catalyzes the sequential condensation of isopentenyl pyrophosphate with dimethylallyl pyrophosphate, and then with the resultant geranylpyrophosphate to the ultimate product farnesyl pyrophosphate. This Gibberella zeae (strain ATCC MYA-4620 / CBS 123657 / FGSC 9075 / NRRL 31084 / PH-1) (Wheat head blight fungus) protein is Farnesyl pyrophosphate synthase ERG20.